The chain runs to 124 residues: Glycine cleavage system H protein (124 aa).

The 83-residue stretch at 22–104 folds into the Lipoyl-binding domain; sequence VATVGITEFA…YGAGWLFRVE (83 aa). An N6-lipoyllysine modification is found at lysine 63.

Belongs to the GcvH family. In terms of assembly, the glycine cleavage system is composed of four proteins: P, T, L and H. (R)-lipoate is required as a cofactor.

Its function is as follows. The glycine cleavage system catalyzes the degradation of glycine. The H protein shuttles the methylamine group of glycine from the P protein to the T protein. The sequence is that of Glycine cleavage system H protein from Beutenbergia cavernae (strain ATCC BAA-8 / DSM 12333 / CCUG 43141 / JCM 11478 / NBRC 16432 / NCIMB 13614 / HKI 0122).